Consider the following 184-residue polypeptide: Large ribosomal subunit protein uL5 (184 aa).

The protein belongs to the universal ribosomal protein uL5 family. As to quaternary structure, component of the large ribosomal subunit. Interacts with Fmr1 to form the RNA-induced silencing complex (RISC), a ribonucleoprotein (RNP) complex involved in translation regulation, other components of the complex are RpL5, Rm62, AGO2 and Dcr-1.

Its subcellular location is the nucleus. The protein localises to the cytoplasm. Functionally, component of the ribosome, a large ribonucleoprotein complex responsible for the synthesis of proteins in the cell. The small ribosomal subunit (SSU) binds messenger RNAs (mRNAs) and translates the encoded message by selecting cognate aminoacyl-transfer RNA (tRNA) molecules. The large subunit (LSU) contains the ribosomal catalytic site termed the peptidyl transferase center (PTC), which catalyzes the formation of peptide bonds, thereby polymerizing the amino acids delivered by tRNAs into a polypeptide chain. The nascent polypeptides leave the ribosome through a tunnel in the LSU and interact with protein factors that function in enzymatic processing, targeting, and the membrane insertion of nascent chains at the exit of the ribosomal tunnel. In Drosophila melanogaster (Fruit fly), this protein is Large ribosomal subunit protein uL5 (RpL11).